A 161-amino-acid polypeptide reads, in one-letter code: MSWLPKSPKARRRLMLVAAIAPVLAVAAGLTLWGLSDSISFFYTPSQAEAARPAPGRSIQLGGLVAAGSVVKHPDGRVEFTVADQDAEDRVLFQGDLPDLFREGQGVVAIGAFREDGVFEAKRVLAKHDERYMPREVSKALKEQGEWYGDGQRPEHQGDAL.

Over 1–13 the chain is Cytoplasmic; that stretch reads MSWLPKSPKARRR. A helical; Signal-anchor for type II membrane protein transmembrane segment spans residues 14 to 34; the sequence is LMLVAAIAPVLAVAAGLTLWG. The Periplasmic portion of the chain corresponds to 35-161; it reads LSDSISFFYT…QRPEHQGDAL (127 aa). Positions 128 and 132 each coordinate heme.

It belongs to the CcmE/CycJ family.

It is found in the cell inner membrane. Functionally, heme chaperone required for the biogenesis of c-type cytochromes. Transiently binds heme delivered by CcmC and transfers the heme to apo-cytochromes in a process facilitated by CcmF and CcmH. The chain is Cytochrome c-type biogenesis protein CcmE from Phenylobacterium zucineum (strain HLK1).